Consider the following 270-residue polypeptide: Ribosomal RNA small subunit methyltransferase A (270 aa).

The S-adenosyl-L-methionine site is built by Asn-15, Ile-17, Gly-42, Glu-64, Asp-89, and Asn-108.

This sequence belongs to the class I-like SAM-binding methyltransferase superfamily. rRNA adenine N(6)-methyltransferase family. RsmA subfamily.

It localises to the cytoplasm. It carries out the reaction adenosine(1518)/adenosine(1519) in 16S rRNA + 4 S-adenosyl-L-methionine = N(6)-dimethyladenosine(1518)/N(6)-dimethyladenosine(1519) in 16S rRNA + 4 S-adenosyl-L-homocysteine + 4 H(+). Its function is as follows. Specifically dimethylates two adjacent adenosines (A1518 and A1519) in the loop of a conserved hairpin near the 3'-end of 16S rRNA in the 30S particle. May play a critical role in biogenesis of 30S subunits. This is Ribosomal RNA small subunit methyltransferase A from Anaplasma marginale (strain Florida).